The sequence spans 95 residues: Translation initiation factor IF-1 (95 aa).

The region spanning 1–72 (MAKEELIEMD…TKARITYRHK (72 aa)) is the S1-like domain. The segment at 70 to 95 (RHKVGGPPGPVTGGGNRPPPRQPRRR) is disordered. Positions 86 to 95 (RPPPRQPRRR) are enriched in pro residues.

This sequence belongs to the IF-1 family. In terms of assembly, component of the 30S ribosomal translation pre-initiation complex which assembles on the 30S ribosome in the order IF-2 and IF-3, IF-1 and N-formylmethionyl-tRNA(fMet); mRNA recruitment can occur at any time during PIC assembly.

Its subcellular location is the cytoplasm. Functionally, one of the essential components for the initiation of protein synthesis. Stabilizes the binding of IF-2 and IF-3 on the 30S subunit to which N-formylmethionyl-tRNA(fMet) subsequently binds. Helps modulate mRNA selection, yielding the 30S pre-initiation complex (PIC). Upon addition of the 50S ribosomal subunit IF-1, IF-2 and IF-3 are released leaving the mature 70S translation initiation complex. The protein is Translation initiation factor IF-1 of Rhodospirillum rubrum (strain ATCC 11170 / ATH 1.1.1 / DSM 467 / LMG 4362 / NCIMB 8255 / S1).